Reading from the N-terminus, the 153-residue chain is Insulin-like growth factor 1 (153 aa).

The b stretch occupies residues 49–77; that stretch reads GPETLCGAELVDALQFVCGDRGFYFSKPT. 3 disulfide bridges follow: Cys-54-Cys-96, Cys-66-Cys-109, and Cys-95-Cys-100. Positions 78–89 are c; that stretch reads GYGSSSRRLHHK. The tract at residues 90–110 is a; it reads GIVDECCFQSCDLRRLEMYCA. Residues 111 to 118 form a d region; it reads PIKPPKSA. The propeptide at 119-153 is e peptide; the sequence is RSVRAQRHTDMPKAQKEVHLKNTSRGNTGNRNYRM. The interval 119-153 is disordered; it reads RSVRAQRHTDMPKAQKEVHLKNTSRGNTGNRNYRM. A compositionally biased stretch (basic and acidic residues) spans 125 to 138; the sequence is RHTDMPKAQKEVHL. The span at 139–153 shows a compositional bias: polar residues; that stretch reads KNTSRGNTGNRNYRM.

It belongs to the insulin family. Forms a ternary complex with IGFR1 and ITGAV:ITGB3. Forms a ternary complex with IGFR1 and ITGA6:ITGB4. Forms a ternary complex with IGFBP3 and ALS.

The protein resides in the secreted. Its function is as follows. The insulin-like growth factors, isolated from plasma, are structurally and functionally related to insulin but have a much higher growth-promoting activity. Acts as a ligand for IGF1R. Binds to the alpha subunit of IGF1R, leading to the activation of the intrinsic tyrosine kinase activity which autophosphorylates tyrosine residues in the beta subunit thus initiatiating a cascade of down-stream signaling events leading to activation of the PI3K-AKT/PKB and the Ras-MAPK pathways. Binds to integrins. Its binding to integrins and subsequent ternary complex formation with integrins and IGFR1 are essential for IGF1 signaling. This is Insulin-like growth factor 1 from Gallus gallus (Chicken).